Reading from the N-terminus, the 411-residue chain is Actin-like protein 9 (411 aa).

A compositionally biased stretch (basic and acidic residues) spans 1–15 (MDVNGPKRWEPHRSL). Residues 1-23 (MDVNGPKRWEPHRSLDLNPRSTP) form a disordered region.

The protein belongs to the actin family. As to quaternary structure, interacts with ACTL7A.

It localises to the cytoplasmic vesicle. It is found in the secretory vesicle. The protein localises to the acrosome. The protein resides in the cytoplasm. Its subcellular location is the cytoskeleton. It localises to the perinuclear theca. In terms of biological role, testis-specic protein that plays an important role in fusion of proacrosomal vesicles and perinuclear theca formation. This is Actin-like protein 9 (Actl9) from Rattus norvegicus (Rat).